Reading from the N-terminus, the 292-residue chain is Poly-beta-1,6-N-acetyl-D-glucosamine N-deacetylase (292 aa).

The N-terminal stretch at 1-28 is a signal peptide; that stretch reads MKYRKFIILVLSILIILPVSTLDGHHIA. The region spanning 114–292 is the NodB homology domain; sequence RSVWINFDDM…WDGFHEKDET (179 aa).

It belongs to the polysaccharide deacetylase family.

The protein resides in the secreted. The protein localises to the cell wall. Catalyzes the N-deacetylation of poly-beta-1,6-N-acetyl-D-glucosamine (PNAG, also referred to as PIA), a biofilm adhesin polysaccharide. N-deacetylation is crucial for attachment of the polysaccharide to the bacterial cell surface; it leads to the introduction of positive charges in the otherwise neutral PIA polymer, allowing electrostatic interactions. This chain is Poly-beta-1,6-N-acetyl-D-glucosamine N-deacetylase (icaB), found in Staphylococcus aureus (strain COL).